The chain runs to 892 residues: DNA replication licensing factor mcm6 (892 aa).

Phosphoserine occurs at positions 96 and 98. Residues 426–633 form the MCM domain; sequence IYSRLTNSLA…VDRHLAKHIV (208 aa). Residue 476-483 participates in ATP binding; that stretch reads GDPSTSKS. Residues 608-611 carry the Arginine finger motif; the sequence is SRFD. Residues 748–758 show a composition bias toward acidic residues; sequence EDDAEAQELEN. A disordered region spans residues 748 to 774; the sequence is EDDAEAQELENDNTNTTNGNDNVSSEE. Low complexity predominate over residues 759–769; sequence DNTNTTNGNDN.

The protein belongs to the MCM family. Component of the mcm2-7 complex. The complex forms a toroidal hexameric ring with the proposed subunit order mcm2-mcm6-mcm4-mcm7-mcm3-mcm5. The heterodimers of mcm4/mcm6 and mcm3/mcm5 interact with mcm2 and mcm7. Interacts with sld3.

The protein resides in the nucleus. It carries out the reaction ATP + H2O = ADP + phosphate + H(+). Its function is as follows. Acts as a component of the mcm2-7 complex (mcm complex) which is the putative replicative helicase essential for 'once per cell cycle' DNA replication initiation and elongation in eukaryotic cells. The active ATPase sites in the mcm2-7 ring are formed through the interaction surfaces of two neighboring subunits such that a critical structure of a conserved arginine finger motif is provided in trans relative to the ATP-binding site of the Walker A box of the adjacent subunit. The six ATPase active sites, however, are likely to contribute differentially to the complex helicase activity. In Schizosaccharomyces pombe (strain 972 / ATCC 24843) (Fission yeast), this protein is DNA replication licensing factor mcm6 (mcm6).